A 201-amino-acid chain; its full sequence is Peptidyl-tRNA hydrolase (201 aa).

Y17 contributes to the tRNA binding site. Catalysis depends on H22, which acts as the Proton acceptor. The tRNA site is built by F76, N78, and N124.

Belongs to the PTH family. As to quaternary structure, monomer.

Its subcellular location is the cytoplasm. The catalysed reaction is an N-acyl-L-alpha-aminoacyl-tRNA + H2O = an N-acyl-L-amino acid + a tRNA + H(+). Its function is as follows. Hydrolyzes ribosome-free peptidyl-tRNAs (with 1 or more amino acids incorporated), which drop off the ribosome during protein synthesis, or as a result of ribosome stalling. Functionally, catalyzes the release of premature peptidyl moieties from peptidyl-tRNA molecules trapped in stalled 50S ribosomal subunits, and thus maintains levels of free tRNAs and 50S ribosomes. The polypeptide is Peptidyl-tRNA hydrolase (Nitratidesulfovibrio vulgaris (strain ATCC 29579 / DSM 644 / CCUG 34227 / NCIMB 8303 / VKM B-1760 / Hildenborough) (Desulfovibrio vulgaris)).